The primary structure comprises 158 residues: Molybdopterin synthase catalytic subunit (158 aa).

Substrate is bound by residues histidine 107 to arginine 108, lysine 123, and lysine 130 to glutamate 132.

The protein belongs to the MoaE family. MOCS2B subfamily. Heterotetramer; composed of 2 small (mocs2s) and 2 large (mocs2l) subunits.

It localises to the cytoplasm. The catalysed reaction is 2 [molybdopterin-synthase sulfur-carrier protein]-C-terminal-Gly-aminoethanethioate + cyclic pyranopterin phosphate + H2O = molybdopterin + 2 [molybdopterin-synthase sulfur-carrier protein]-C-terminal Gly-Gly + 2 H(+). It functions in the pathway cofactor biosynthesis; molybdopterin biosynthesis. In terms of biological role, catalytic subunit of the molybdopterin synthase complex, a complex that catalyzes the conversion of precursor Z into molybdopterin. Acts by mediating the incorporation of 2 sulfur atoms from thiocarboxylated mocs2s into precursor Z to generate a dithiolene group. This Dictyostelium discoideum (Social amoeba) protein is Molybdopterin synthase catalytic subunit (mocs2l).